A 540-amino-acid chain; its full sequence is Phosphoenolpyruvate carboxykinase (ATP) (540 aa).

Arginine 65 serves as a coordination point for substrate. An N6-acetyllysine modification is found at lysine 87. 2 residues coordinate substrate: tyrosine 207 and lysine 213. ATP contacts are provided by residues lysine 213, histidine 232, and 248–256; that span reads GLSGTGKTT. Positions 213 and 232 each coordinate Mn(2+). Aspartate 269 is a Mn(2+) binding site. ATP-binding positions include glutamate 297, arginine 333, 449-450, and threonine 455; that span reads RI. A substrate-binding site is contributed by arginine 333. Lysine 523 is subject to N6-acetyllysine.

Belongs to the phosphoenolpyruvate carboxykinase (ATP) family. As to quaternary structure, monomer. Mn(2+) serves as cofactor.

It is found in the cytoplasm. The enzyme catalyses oxaloacetate + ATP = phosphoenolpyruvate + ADP + CO2. Its pathway is carbohydrate biosynthesis; gluconeogenesis. Its function is as follows. Involved in the gluconeogenesis. Catalyzes the conversion of oxaloacetate (OAA) to phosphoenolpyruvate (PEP) through direct phosphoryl transfer between the nucleoside triphosphate and OAA. This Escherichia coli O157:H7 protein is Phosphoenolpyruvate carboxykinase (ATP).